The primary structure comprises 406 residues: 4-hydroxy-3-methylbut-2-en-1-yl diphosphate synthase (flavodoxin) (406 aa).

The [4Fe-4S] cluster site is built by Cys297, Cys300, Cys343, and Glu350.

The protein belongs to the IspG family. Requires [4Fe-4S] cluster as cofactor.

It carries out the reaction (2E)-4-hydroxy-3-methylbut-2-enyl diphosphate + oxidized [flavodoxin] + H2O + 2 H(+) = 2-C-methyl-D-erythritol 2,4-cyclic diphosphate + reduced [flavodoxin]. It participates in isoprenoid biosynthesis; isopentenyl diphosphate biosynthesis via DXP pathway; isopentenyl diphosphate from 1-deoxy-D-xylulose 5-phosphate: step 5/6. Converts 2C-methyl-D-erythritol 2,4-cyclodiphosphate (ME-2,4cPP) into 1-hydroxy-2-methyl-2-(E)-butenyl 4-diphosphate. This Thermus thermophilus (strain ATCC 27634 / DSM 579 / HB8) protein is 4-hydroxy-3-methylbut-2-en-1-yl diphosphate synthase (flavodoxin).